The primary structure comprises 44 residues: Large ribosomal subunit protein P2 (44 aa).

Met1 is modified (N-acetylmethionine). Phosphoserine occurs at positions 17 and 19. The residue at position 21 (Lys21) is an N6-acetyllysine; alternate. An N6-succinyllysine; alternate modification is found at Lys21.

The protein belongs to the eukaryotic ribosomal protein P1/P2 family. In terms of assembly, heterodimer with RPLP1 at the lateral ribosomal stalk of the large ribosomal subunit. In terms of processing, phosphorylated.

Plays an important role in the elongation step of protein synthesis. The protein is Large ribosomal subunit protein P2 (RPLP2) of Oryctolagus cuniculus (Rabbit).